The chain runs to 863 residues: Envelope glycoprotein gp160 (863 aa).

Positions 1–32 are cleaved as a signal peptide; the sequence is MIVTMKAMEKRNKKLWTLYLAMALITPCLSLR. At 33-684 the chain is on the extracellular side; that stretch reads QLYATVYAGV…ITKWLWYIKI (652 aa). C54 and C74 are joined by a disulfide. N-linked (GlcNAc...) asparagine; by host glycans are attached at residues N59 and N88. 5 disulfide bridges follow: C119–C201, C126–C192, C131–C146, C214–C243, and C224–C235. Residues 131 to 145 are V1; that stretch reads CTNIAGTTNENLMKK. The segment at 146–192 is V2; it reads CEFNVTTVIKDKKEKKQALFYVSDLMELNETSSTNKTNSKMYTLTNC. N-linked (GlcNAc...) asparagine; by host glycosylation is found at N149, N174, N180, N193, N225, N230, N237, N258, N285, N289, N320, N330, N350, N356, and N360. A V3 region spans residues 292-326; it reads CERPQIDIQEMRIGPMAWYSMGIGGTAGNSSRAAY. A disulfide bridge connects residues C292 and C327. Residues 362–372 are CD4-binding loop; the sequence is SSGGDLEVTHL. 2 disulfides stabilise this stretch: C376-C442 and C383-C415. A V4 region spans residues 383-415; the sequence is CNTAKMFNYTFSCNGTTCSVSNVSQGNNGTLPC. 8 N-linked (GlcNAc...) asparagine; by host glycosylation sites follow: N390, N396, N404, N410, N439, N445, N458, and N463. V5 regions lie at residues 458–469 and 460–469; these read NSSNNNVTFRPI and SNNNVTFRPI. The fusion peptide stretch occupies residues 514–534; sequence AVGLGMLFLGVLSAAGSTMGA. Residues 576–594 are immunosuppression; sequence RQLRARLLALETLLQNQQL. A disulfide bond links C600 and C606. N613, N619, and N637 each carry an N-linked (GlcNAc...) asparagine; by host glycan. A coiled-coil region spans residues 633–667; the sequence is RQISNISSTIYEEIQKAQVQQEQNEKKLLELDEWA. The MPER; binding to GalCer stretch occupies residues 662–683; the sequence is ELDEWASIWNWLDITKWLWYIK. A helical transmembrane segment spans residues 685-705; sequence AIIIVGALVGVRVIMIVLNIV. Topologically, residues 706 to 863 are cytoplasmic; the sequence is KNIRQGYQPL…IRQGLERSLL (158 aa). Residues 712 to 715 carry the YXXL motif; contains endocytosis signal motif; it reads YQPL. A Di-leucine internalization motif motif is present at residues 862 to 863; the sequence is LL.

Belongs to the HIV-1 env protein family. The mature envelope protein (Env) consists of a homotrimer of non-covalently associated gp120-gp41 heterodimers. The resulting complex protrudes from the virus surface as a spike. There seems to be as few as 10 spikes on the average virion. Interacts with host CD4, CCR5 and CXCR4. Gp120 also interacts with the C-type lectins CD209/DC-SIGN and CLEC4M/DC-SIGNR (collectively referred to as DC-SIGN(R)). Gp120 and gp41 interact with GalCer. Gp120 interacts with host ITGA4/ITGB7 complex; on CD4+ T-cells, this interaction results in rapid activation of integrin ITGAL/LFA-1, which facilitates efficient cell-to-cell spreading of HIV-1. Gp120 interacts with cell-associated heparan sulfate; this interaction increases virus infectivity on permissive cells and may be involved in infection of CD4- cells. As to quaternary structure, the mature envelope protein (Env) consists of a homotrimer of non-covalently associated gp120-gp41 heterodimers. The resulting complex protrudes from the virus surface as a spike. There seems to be as few as 10 spikes on the average virion. Highly glycosylated by host. The high number of glycan on the protein is reffered to as 'glycan shield' because it contributes to hide protein sequence from adaptive immune system. Post-translationally, palmitoylation of the transmembrane protein and of Env polyprotein (prior to its proteolytic cleavage) is essential for their association with host cell membrane lipid rafts. Palmitoylation is therefore required for envelope trafficking to classical lipid rafts, but not for viral replication. In terms of processing, specific enzymatic cleavages in vivo yield mature proteins. Envelope glycoproteins are synthesized as an inactive precursor that is heavily N-glycosylated and processed likely by host cell furin in the Golgi to yield the mature SU and TM proteins. The cleavage site between SU and TM requires the minimal sequence [KR]-X-[KR]-R. About 2 of the 9 disulfide bonds of gp41 are reduced by P4HB/PDI, following binding to CD4 receptor.

The protein localises to the virion membrane. Its subcellular location is the host cell membrane. It localises to the host endosome membrane. Oligomerizes in the host endoplasmic reticulum into predominantly trimers. In a second time, gp160 transits in the host Golgi, where glycosylation is completed. The precursor is then proteolytically cleaved in the trans-Golgi and thereby activated by cellular furin or furin-like proteases to produce gp120 and gp41. Its function is as follows. Attaches the virus to the host lymphoid cell by binding to the primary receptor CD4. This interaction induces a structural rearrangement creating a high affinity binding site for a chemokine coreceptor like CXCR4 and/or CCR5. Acts as a ligand for CD209/DC-SIGN and CLEC4M/DC-SIGNR, which are respectively found on dendritic cells (DCs), and on endothelial cells of liver sinusoids and lymph node sinuses. These interactions allow capture of viral particles at mucosal surfaces by these cells and subsequent transmission to permissive cells. HIV subverts the migration properties of dendritic cells to gain access to CD4+ T-cells in lymph nodes. Virus transmission to permissive T-cells occurs either in trans (without DCs infection, through viral capture and transmission), or in cis (following DCs productive infection, through the usual CD4-gp120 interaction), thereby inducing a robust infection. In trans infection, bound virions remain infectious over days and it is proposed that they are not degraded, but protected in non-lysosomal acidic organelles within the DCs close to the cell membrane thus contributing to the viral infectious potential during DCs' migration from the periphery to the lymphoid tissues. On arrival at lymphoid tissues, intact virions recycle back to DCs' cell surface allowing virus transmission to CD4+ T-cells. Functionally, acts as a class I viral fusion protein. Under the current model, the protein has at least 3 conformational states: pre-fusion native state, pre-hairpin intermediate state, and post-fusion hairpin state. During fusion of viral and target intracellular membranes, the coiled coil regions (heptad repeats) assume a trimer-of-hairpins structure, positioning the fusion peptide in close proximity to the C-terminal region of the ectodomain. The formation of this structure appears to drive apposition and subsequent fusion of viral and target cell membranes. Complete fusion occurs in host cell endosomes and is dynamin-dependent, however some lipid transfer might occur at the plasma membrane. The virus undergoes clathrin-dependent internalization long before endosomal fusion, thus minimizing the surface exposure of conserved viral epitopes during fusion and reducing the efficacy of inhibitors targeting these epitopes. Membranes fusion leads to delivery of the nucleocapsid into the cytoplasm. The polypeptide is Envelope glycoprotein gp160 (Human immunodeficiency virus type 1 group O (isolate ANT70) (HIV-1)).